Reading from the N-terminus, the 280-residue chain is Undecaprenyl-diphosphatase (280 aa).

8 consecutive transmembrane segments (helical) span residues phenylalanine 2–leucine 22, alanine 45–isoleucine 65, tryptophan 86–leucine 106, phenylalanine 114–leucine 134, leucine 147–phenylalanine 167, serine 188–tryptophan 208, glycine 223–isoleucine 243, and phenylalanine 255–isoleucine 275.

This sequence belongs to the UppP family.

It localises to the cell membrane. It catalyses the reaction di-trans,octa-cis-undecaprenyl diphosphate + H2O = di-trans,octa-cis-undecaprenyl phosphate + phosphate + H(+). In terms of biological role, catalyzes the dephosphorylation of undecaprenyl diphosphate (UPP). Confers resistance to bacitracin. This Streptococcus sanguinis (strain SK36) protein is Undecaprenyl-diphosphatase.